The sequence spans 182 residues: Methionine-R-sulfoxide reductase B2, mitochondrial (182 aa).

The transit peptide at 1-20 (MARLLWLLRGLTLGTAPRRA) directs the protein to the mitochondrion. The MsrB domain occupies 51–180 (KSEWQKKLTP…NSVALKFKPR (130 aa)). Cys90, Cys93, Cys146, and Cys149 together coordinate Zn(2+). Residue Cys169 is the Nucleophile of the active site.

The protein belongs to the MsrB Met sulfoxide reductase family. Interacts with DAOA; the interaction is direct. Zn(2+) is required as a cofactor. Ubiquitous. Detected in retina, ocular ciliary body, skeletal muscle, heart, colon, bone marrow, cerebellum, small intestine, fetal brain, fetal liver, kidney, spinal cord, lung, placenta and prostate.

It is found in the mitochondrion. The catalysed reaction is L-methionyl-[protein] + [thioredoxin]-disulfide + H2O = L-methionyl-(R)-S-oxide-[protein] + [thioredoxin]-dithiol. It carries out the reaction [thioredoxin]-disulfide + L-methionine + H2O = L-methionine (R)-S-oxide + [thioredoxin]-dithiol. Functionally, methionine-sulfoxide reductase that specifically reduces methionine (R)-sulfoxide back to methionine. While in many cases, methionine oxidation is the result of random oxidation following oxidative stress, methionine oxidation is also a post-translational modification that takes place on specific residue. Upon oxidative stress, may play a role in the preservation of mitochondrial integrity by decreasing the intracellular reactive oxygen species build-up through its scavenging role, hence contributing to cell survival and protein maintenance. This chain is Methionine-R-sulfoxide reductase B2, mitochondrial (MSRB2), found in Homo sapiens (Human).